The primary structure comprises 583 residues: Undecaprenyl phosphate-alpha-4-amino-4-deoxy-L-arabinose arabinosyl transferase 2 (583 aa).

The segment at 1 to 20 is disordered; sequence MTSRIQMHRTSPPPAYGTSA. 12 helical membrane-spanning segments follow: residues 42-62, 113-135, 145-165, 166-186, 209-229, 241-261, 290-310, 321-341, 345-365, 380-400, 409-429, and 440-460; these read LLLVAFGLFYLLPLTSHGLWI, LFGVRIASALSTGLSVLLAYLIT, SFAAALLYMSFGLIAGQAGYS, NLDPQFTLWVNLSLVALWFAL, FMTKGFLAWLLPVLIALPYMI, GLVAVLVAIGISLPWVLSIHA, WWFYLPLLVASSLPWAALLPG, QAPTGFLLLWFLLPLAFFSLS, LPTYIMPCLLPLAVLMGSALI, SLLNLLIGVAAMVALLYIQLT, MLGLSLVFIMLMGWIIANLLP, and PALGIWLLVALLPAGMPGFIV.

Belongs to the glycosyltransferase 83 family.

It is found in the cell inner membrane. The catalysed reaction is 4-amino-4-deoxy-alpha-L-arabinopyranosyl di-trans,octa-cis-undecaprenyl phosphate + lipid IVA = lipid IIA + di-trans,octa-cis-undecaprenyl phosphate.. The protein operates within lipopolysaccharide metabolism; 4-amino-4-deoxy-beta-L-arabinose-lipid A biosynthesis. Catalyzes the transfer of the L-Ara4N moiety of the glycolipid undecaprenyl phosphate-alpha-L-Ara4N to lipid A. The modified arabinose is attached to lipid A and is required for resistance to polymyxin and cationic antimicrobial peptides. This is Undecaprenyl phosphate-alpha-4-amino-4-deoxy-L-arabinose arabinosyl transferase 2 from Pseudomonas fluorescens (strain ATCC BAA-477 / NRRL B-23932 / Pf-5).